Here is a 341-residue protein sequence, read N- to C-terminus: Phenylalanine--tRNA ligase alpha subunit (341 aa).

A Mg(2+)-binding site is contributed by Glu-256.

The protein belongs to the class-II aminoacyl-tRNA synthetase family. Phe-tRNA synthetase alpha subunit type 1 subfamily. Tetramer of two alpha and two beta subunits. The cofactor is Mg(2+).

The protein resides in the cytoplasm. It catalyses the reaction tRNA(Phe) + L-phenylalanine + ATP = L-phenylalanyl-tRNA(Phe) + AMP + diphosphate + H(+). The sequence is that of Phenylalanine--tRNA ligase alpha subunit from Leptospira biflexa serovar Patoc (strain Patoc 1 / Ames).